The sequence spans 777 residues: 5-methyltetrahydropteroyltriglutamate--homocysteine methyltransferase (777 aa).

5-methyltetrahydropteroyltri-L-glutamate contacts are provided by residues 17–20 (RELK) and K132. Residues 455 to 457 (IGS) and E508 contribute to the L-homocysteine site. L-methionine contacts are provided by residues 455-457 (IGS) and E508. 5-methyltetrahydropteroyltri-L-glutamate-binding positions include 539–540 (RC) and W585. D623 serves as a coordination point for L-homocysteine. An L-methionine-binding site is contributed by D623. E629 is a 5-methyltetrahydropteroyltri-L-glutamate binding site. Residues H665, C667, and E689 each contribute to the Zn(2+) site. H718 acts as the Proton donor in catalysis. Zn(2+) is bound at residue C750.

Belongs to the vitamin-B12 independent methionine synthase family. Requires Zn(2+) as cofactor.

It carries out the reaction 5-methyltetrahydropteroyltri-L-glutamate + L-homocysteine = tetrahydropteroyltri-L-glutamate + L-methionine. It participates in amino-acid biosynthesis; L-methionine biosynthesis via de novo pathway; L-methionine from L-homocysteine (MetE route): step 1/1. Functionally, catalyzes the transfer of a methyl group from 5-methyltetrahydrofolate to homocysteine resulting in methionine formation. The polypeptide is 5-methyltetrahydropteroyltriglutamate--homocysteine methyltransferase (Caulobacter vibrioides (strain ATCC 19089 / CIP 103742 / CB 15) (Caulobacter crescentus)).